A 365-amino-acid polypeptide reads, in one-letter code: 7-methylxanthine methyltransferase PCS1 (365 aa).

Residue tyrosine 19 coordinates S-adenosyl-L-homocysteine. Threonine 26 contacts caffeine. S-adenosyl-L-homocysteine contacts are provided by cysteine 62, asparagine 67, aspartate 99, leucine 100, serine 134, and phenylalanine 135. Caffeine is bound by residues tyrosine 152, histidine 155, and tryptophan 156. Asparagine 173 lines the Mg(2+) pocket. Histidine 221 provides a ligand contact to caffeine. The Mg(2+) site is built by aspartate 259, phenylalanine 261, and asparagine 262. Phenylalanine 317 serves as a coordination point for caffeine.

This sequence belongs to the methyltransferase superfamily. Type-7 methyltransferase family. It depends on Mg(2+) as a cofactor.

It carries out the reaction 1,7-dimethylxanthine + S-adenosyl-L-methionine = caffeine + S-adenosyl-L-homocysteine + H(+). The enzyme catalyses 7-methylxanthine + S-adenosyl-L-methionine = theobromine + S-adenosyl-L-homocysteine + H(+). Its pathway is alkaloid biosynthesis. Functionally, involved in the biosynthesis of caffeine. Catalyzes the conversion of 7-methylxanthine (7mX) to theobromine, and, to some extent, the conversion of paraxanthine to caffeine, but seems not able to convert theobromine to caffeine. The chain is 7-methylxanthine methyltransferase PCS1 from Camellia ptilophylla (Cocoa tea).